A 233-amino-acid polypeptide reads, in one-letter code: MSNTPIELKGSNFTLSVLHLNDGSPKVIRQAISDKIAQAPQFLKNAPVVINVSAIADQTIDFKKLRRIVEDAGLRVVGISGSHDAQQKEAIIAAQLPILNEGKITKPAAQANNDKTNEVPINVRQKTKIIHTPVRSGQRIYAPNSDLVVLSNVSAGAELIADGNVHIYGVLRGRVLAGASGDQESHIFCTHLSAELVSIAGQYWLSDQIPTDFVGKSVQLSLQENELTIENLI.

Belongs to the MinC family. As to quaternary structure, interacts with MinD and FtsZ.

Its function is as follows. Cell division inhibitor that blocks the formation of polar Z ring septums. Rapidly oscillates between the poles of the cell to destabilize FtsZ filaments that have formed before they mature into polar Z rings. Prevents FtsZ polymerization. This Proteus mirabilis (strain HI4320) protein is Probable septum site-determining protein MinC.